We begin with the raw amino-acid sequence, 509 residues long: ATP synthase subunit alpha (509 aa).

169 to 176 is a binding site for ATP; it reads GDRKTGKT.

This sequence belongs to the ATPase alpha/beta chains family. As to quaternary structure, F-type ATPases have 2 components, CF(1) - the catalytic core - and CF(0) - the membrane proton channel. CF(1) has five subunits: alpha(3), beta(3), gamma(1), delta(1), epsilon(1). CF(0) has three main subunits: a(1), b(2) and c(9-12). The alpha and beta chains form an alternating ring which encloses part of the gamma chain. CF(1) is attached to CF(0) by a central stalk formed by the gamma and epsilon chains, while a peripheral stalk is formed by the delta and b chains.

The protein resides in the cell membrane. The enzyme catalyses ATP + H2O + 4 H(+)(in) = ADP + phosphate + 5 H(+)(out). Produces ATP from ADP in the presence of a proton gradient across the membrane. The alpha chain is a regulatory subunit. This is ATP synthase subunit alpha from Limosilactobacillus reuteri (strain DSM 20016) (Lactobacillus reuteri).